The sequence spans 348 residues: Benzoate 1,2-dioxygenase electron transfer component (348 aa).

One can recognise a 2Fe-2S ferredoxin-type domain in the interval histidine 14–serine 109. Residues cysteine 51, cysteine 56, cysteine 59, and cysteine 93 each contribute to the [2Fe-2S] cluster site. The interval valine 111 to asparagine 348 is ferredoxin-reductase. The FAD-binding FR-type domain occupies isoleucine 116 to arginine 217.

This sequence belongs to the bacterial ring-hydroxylating dioxygenase ferredoxin reductase family. As to quaternary structure, this dioxygenase system consists of three proteins: the two subunits of the hydroxylase component (BenA and BenB), and an electron transfer component (BenC). It depends on FAD as a cofactor. [2Fe-2S] cluster is required as a cofactor.

It carries out the reaction 2 reduced [2Fe-2S]-[ferredoxin] + NAD(+) + H(+) = 2 oxidized [2Fe-2S]-[ferredoxin] + NADH. It participates in xenobiotic degradation; toluene degradation. Electron transfer component of benzoate 1,2-dioxygenase system. This Acinetobacter baylyi (strain ATCC 33305 / BD413 / ADP1) protein is Benzoate 1,2-dioxygenase electron transfer component (benC).